The primary structure comprises 200 residues: UPF0316 protein Mhun_0543 (200 aa).

The next 3 helical transmembrane spans lie at 3-23 (VGFLSSDLFTFGLIPVLIFLA), 44-64 (FIAPVFGFFEVTIWLLAIGQV), and 71-91 (PICYIAYGAGFAAGTYIGMEL).

Belongs to the UPF0316 family.

It is found in the cell membrane. The sequence is that of UPF0316 protein Mhun_0543 from Methanospirillum hungatei JF-1 (strain ATCC 27890 / DSM 864 / NBRC 100397 / JF-1).